The primary structure comprises 309 residues: Homoserine kinase (309 aa).

91–101 (PIGSGLGSSAC) serves as a coordination point for ATP.

The protein belongs to the GHMP kinase family. Homoserine kinase subfamily.

It is found in the cytoplasm. It carries out the reaction L-homoserine + ATP = O-phospho-L-homoserine + ADP + H(+). It participates in amino-acid biosynthesis; L-threonine biosynthesis; L-threonine from L-aspartate: step 4/5. In terms of biological role, catalyzes the ATP-dependent phosphorylation of L-homoserine to L-homoserine phosphate. The chain is Homoserine kinase from Erwinia tasmaniensis (strain DSM 17950 / CFBP 7177 / CIP 109463 / NCPPB 4357 / Et1/99).